The primary structure comprises 1394 residues: Coiled-coil domain-containing protein 7 (1394 aa).

Positions 308 to 340 (LLDAEYKQIQRDFELLSEEKLVLENELQKLKDT) form a coiled coil. A disordered region spans residues 345–375 (STNNRTKKAAKTVKKKDKGKSEDSEKKMSSE). The span at 349–362 (RTKKAAKTVKKKDK) shows a compositional bias: basic residues. The segment covering 363 to 375 (GKSEDSEKKMSSE) has biased composition (basic and acidic residues). The stretch at 383–421 (LDQVQKVARLEIENKVLQEQLKQALQEAEKAKHQLNYFL) forms a coiled coil. Disordered regions lie at residues 431-617 (EGKT…EVPD), 634-806 (EQMK…LEHQ), and 819-842 (NEKLPREKRHSTHGEESSENPMLK). Residues 437-446 (TMRVGNSQTE) show a composition bias toward polar residues. The span at 447–462 (VKGEDSKTIPLEKETG) shows a compositional bias: basic and acidic residues. Positions 464–473 (SLVSDSGGQK) are enriched in polar residues. The span at 491-500 (LIEKSSEKKR) shows a compositional bias: basic and acidic residues. Polar residues-rich tracts occupy residues 503 to 513 (PAISDLSQILK), 521 to 538 (LESSNEVSVAENQSNKSP), and 546 to 571 (LTTVSSSKEVQDSLSVGTLAQKNETV). Over residues 583-600 (ESKKADVSEEQLQKKTEE) the composition is skewed to basic and acidic residues. Polar residues predominate over residues 663-679 (SRSQSETKNLEATGNES). The segment covering 695-707 (QDTKSKTEVEVKK) has biased composition (basic and acidic residues). A compositionally biased stretch (polar residues) spans 711–721 (FQDNQLNTHNE). The span at 722 to 736 (VPNERLIVEHQESMS) shows a compositional bias: basic and acidic residues. A compositionally biased stretch (polar residues) spans 780-790 (KEQSTLKGQRI). Basic and acidic residues-rich tracts occupy residues 791-806 (TTHEEEPGKNLALEHQ) and 830-842 (THGEESSENPMLK).

Functionally, may play a role in tumorigenesis. This chain is Coiled-coil domain-containing protein 7 (CCDC7), found in Macaca fascicularis (Crab-eating macaque).